Consider the following 301-residue polypeptide: Probable alpha-L-glutamate ligase (301 aa).

The 184-residue stretch at 104 to 287 (LQLLSRKGIG…VAGMIFDFIE (184 aa)) folds into the ATP-grasp domain. ATP-binding positions include Lys141, 178 to 179 (EF), Asp187, and 211 to 213 (RSN). The Mg(2+) site is built by Asp248, Glu260, and Asn262. The Mn(2+) site is built by Asp248, Glu260, and Asn262.

Belongs to the RimK family. It depends on Mg(2+) as a cofactor. Requires Mn(2+) as cofactor.

The sequence is that of Probable alpha-L-glutamate ligase from Vibrio parahaemolyticus serotype O3:K6 (strain RIMD 2210633).